A 470-amino-acid chain; its full sequence is Crh-like protein UTR2 (470 aa).

An N-terminal signal peptide occupies residues 1 to 23 (MRFSTLHFAFLATLSSIFTVVAA). An intrachain disulfide couples Cys58 to Cys69. Residues Asn65, Asn100, and Asn125 are each glycosylated (N-linked (GlcNAc...) asparagine). In terms of domain architecture, GH16 spans 95–282 (SDYLGNSTEA…WAGGLINWDS (188 aa)). Glu168 serves as the catalytic Nucleophile. Glu172 serves as the catalytic Proton donor. Chitin is bound at residue Glu172. N-linked (GlcNAc...) asparagine glycans are attached at residues Asn177, Asn194, Asn198, Asn202, Asn235, and Asn239. Chitin contacts are provided by Trp259 and Thr270. N-linked (GlcNAc...) asparagine glycans are attached at residues Asn314 and Asn327. Positions 347 to 446 (SDDATGFDPQ…SSGSSSQGVA (100 aa)) are disordered. 2 stretches are compositionally biased toward low complexity: residues 370–384 (TTITSVSGSSTITSV) and 392–408 (TANVPAQNTAAAAQATA). Positions 409 to 418 (KSSTGTNTYD) are enriched in polar residues. The span at 433–446 (TDSGSSGSSSQGVA) shows a compositional bias: low complexity. Ser440 carries the GPI-anchor amidated serine lipid modification. A propeptide spans 441–470 (SSQGVANSLNESVISGIFASICLGILSFFM) (removed in mature form). N-linked (GlcNAc...) asparagine glycosylation occurs at Asn450.

Belongs to the glycosyl hydrolase 16 family. CRH1 subfamily. Post-translationally, the GPI-anchor is attached to the protein in the endoplasmic reticulum and serves to target the protein to the cell surface. There, the glucosamine-inositol phospholipid moiety is cleaved off and the GPI-modified mannoprotein is covalently attached via its lipidless GPI glycan remnant to the 1,6-beta-glucan of the outer cell wall layer.

It localises to the secreted. The protein resides in the cell wall. The protein localises to the membrane. It carries out the reaction Random endo-hydrolysis of N-acetyl-beta-D-glucosaminide (1-&gt;4)-beta-linkages in chitin and chitodextrins.. Its function is as follows. Dual chitinase/transglycosylase that plays a role in cell wall architecture. Chitinase and transglycosylase activities are coupled. Required for the polysaccharide cross-linking at the septa and the cell wall. More specifically, transfers chitin to 1,6-beta-glucan in the cell wall. Plays an important role in fungal pathogenesis via its functions in cell wall assembly and regeneration, filamentation, and adherence to host cells. Acts as a cell surface antigen in acute candidemia patients. The sequence is that of Crh-like protein UTR2 from Candida albicans (strain SC5314 / ATCC MYA-2876) (Yeast).